The chain runs to 446 residues: Glutamate--tRNA ligase 2 (446 aa).

Residues 8–18 (PSPTGYLHIGN) carry the 'HIGH' region motif. A 'KMSKS' region motif is present at residues 239–243 (GLSKR). Lys242 contributes to the ATP binding site.

The protein belongs to the class-I aminoacyl-tRNA synthetase family. Glutamate--tRNA ligase type 1 subfamily. In terms of assembly, monomer.

The protein localises to the cytoplasm. The enzyme catalyses tRNA(Glu) + L-glutamate + ATP = L-glutamyl-tRNA(Glu) + AMP + diphosphate. In terms of biological role, catalyzes the attachment of glutamate to tRNA(Glu) in a two-step reaction: glutamate is first activated by ATP to form Glu-AMP and then transferred to the acceptor end of tRNA(Glu). The polypeptide is Glutamate--tRNA ligase 2 (Methylobacterium radiotolerans (strain ATCC 27329 / DSM 1819 / JCM 2831 / NBRC 15690 / NCIMB 10815 / 0-1)).